Here is a 321-residue protein sequence, read N- to C-terminus: Homoserine O-succinyltransferase (321 aa).

The active-site Acyl-thioester intermediate is Cys142. Residues Lys163 and Ser192 each contribute to the substrate site. The Proton acceptor role is filled by His235. Residue Glu237 is part of the active site. Arg249 serves as a coordination point for substrate.

It belongs to the MetA family.

The protein localises to the cytoplasm. It carries out the reaction L-homoserine + succinyl-CoA = O-succinyl-L-homoserine + CoA. It participates in amino-acid biosynthesis; L-methionine biosynthesis via de novo pathway; O-succinyl-L-homoserine from L-homoserine: step 1/1. Transfers a succinyl group from succinyl-CoA to L-homoserine, forming succinyl-L-homoserine. This Shewanella loihica (strain ATCC BAA-1088 / PV-4) protein is Homoserine O-succinyltransferase.